Consider the following 132-residue polypeptide: Interferon-induced transmembrane protein 5 (132 aa).

The segment covering 1 to 11 (MDTAYPREDTR) has biased composition (basic and acidic residues). Residues 1–21 (MDTAYPREDTRAPTPSKAGAH) are disordered. The Extracellular segment spans residues 1–36 (MDTAYPREDTRAPTPSKAGAHTALTLGAPHPPPRDH). The helical transmembrane segment at 37 to 57 (LIWSVFSTLYLNLCCLGFLAL) threads the bilayer. Residues cysteine 50, cysteine 51, and cysteine 84 are each lipidated (S-palmitoyl cysteine). Topologically, residues 58–86 (AYSIKARDQKVVGDLEAARRFGSKAKCYN) are cytoplasmic. A helical transmembrane segment spans residues 87-107 (ILAAMWTLVPPLLLLGLVVTG). Topologically, residues 108–132 (ALHLARLAKDSAAFFSTKFDDADYD) are extracellular.

This sequence belongs to the CD225/Dispanin family. As to quaternary structure, interacts with FKBP11. Palmitoylated. In terms of tissue distribution, detected in osteoblasts and fibroblasts (at protein level). Detected in bone.

It is found in the cell membrane. Required for normal bone mineralization. The sequence is that of Interferon-induced transmembrane protein 5 (IFITM5) from Homo sapiens (Human).